Reading from the N-terminus, the 2359-residue chain is Nonribosomal peptide synthetase anaPS (2359 aa).

The interval 239-633 (RNATVHGDTL…VRRKDNQVKI (395 aa)) is adenylation 1. Residues 770 to 846 (AAQGKGEEAI…ELASAANLSN (77 aa)) form the Carrier 1 domain. Ser-807 carries the post-translational modification O-(pantetheine 4'-phosphoryl)serine. The segment at 883-1292 (EDIYPSTALQ…VGDLPRMSRQ (410 aa)) is condensation 1. The adenylation 2 stretch occupies residues 1321–1709 (LEYPNACAVS…GRKDSQIKIR (389 aa)). The Carrier 2 domain maps to 1842–1918 (APSNSVEQDL…AIANKIGVVS (77 aa)). Ser-1879 bears the O-(pantetheine 4'-phosphoryl)serine mark. A condensation 2 region spans residues 1936 to 2356 (LTPIQEFFFE…LVKCLEDLAS (421 aa)).

Belongs to the NRP synthetase family.

The catalysed reaction is anthranilate + L-tryptophan + 2 ATP = (R)-benzodiazepinedione + 2 AMP + 2 diphosphate + H(+). Its pathway is alkaloid biosynthesis. Its function is as follows. Nonribosomal peptide synthetase; part of the gene cluster that mediates the biosynthesis of the prenylated pyrroloindoline diketopiperazine acetylaszonalenin. The first step in the pathway is the formation of (R)-benzodiazepinedione by condensation of tryptophan and anthranilic acid catalyzed by the non-ribosomal peptide synthetase anaPS. The prenyltransferase anaPT then converts (R)-benzodiazepinedione to aszonalenin in the presence of dimethylallyl diphosphate (DMAPP) via C3-prenylation. The last step in the biosynthesis of acetylaszonalenin via acetylation of aszonalenin at position N1 catalyzed by anaAT. The protein is Nonribosomal peptide synthetase anaPS of Neosartorya fischeri (strain ATCC 1020 / DSM 3700 / CBS 544.65 / FGSC A1164 / JCM 1740 / NRRL 181 / WB 181) (Aspergillus fischerianus).